The chain runs to 209 residues: FMN-dependent NADH:quinone oxidoreductase 2 (209 aa).

17 to 19 (SAS) provides a ligand contact to FMN.

The protein belongs to the azoreductase type 1 family. Homodimer. Requires FMN as cofactor.

It carries out the reaction 2 a quinone + NADH + H(+) = 2 a 1,4-benzosemiquinone + NAD(+). It catalyses the reaction N,N-dimethyl-1,4-phenylenediamine + anthranilate + 2 NAD(+) = 2-(4-dimethylaminophenyl)diazenylbenzoate + 2 NADH + 2 H(+). Quinone reductase that provides resistance to thiol-specific stress caused by electrophilic quinones. Its function is as follows. Also exhibits azoreductase activity. Catalyzes the reductive cleavage of the azo bond in aromatic azo compounds to the corresponding amines. This is FMN-dependent NADH:quinone oxidoreductase 2 from Lactiplantibacillus plantarum (strain ATCC BAA-793 / NCIMB 8826 / WCFS1) (Lactobacillus plantarum).